The sequence spans 711 residues: DNA topoisomerase 1 (711 aa).

The Toprim domain occupies 3 to 134 (KNLVVIESPN…KCQRITFNEI (132 aa)). Positions 9 and 102 each coordinate Mg(2+). In terms of domain architecture, Topo IA-type catalytic spans 150 to 604 (DQSWVQSQFA…FWSNFKEEVK (455 aa)). Residues 183-188 (SAGRVQ) form an interaction with DNA region. Tyr-340 acts as the O-(5'-phospho-DNA)-tyrosine intermediate in catalysis. 2 consecutive C4-type zinc fingers follow at residues 624-652 (CPSC…FPNC) and 673-702 (CPEC…FPRC).

It belongs to the type IA topoisomerase family. As to quaternary structure, monomer. It depends on Mg(2+) as a cofactor.

The catalysed reaction is ATP-independent breakage of single-stranded DNA, followed by passage and rejoining.. Functionally, releases the supercoiling and torsional tension of DNA, which is introduced during the DNA replication and transcription, by transiently cleaving and rejoining one strand of the DNA duplex. Introduces a single-strand break via transesterification at a target site in duplex DNA. The scissile phosphodiester is attacked by the catalytic tyrosine of the enzyme, resulting in the formation of a DNA-(5'-phosphotyrosyl)-enzyme intermediate and the expulsion of a 3'-OH DNA strand. The free DNA strand then undergoes passage around the unbroken strand, thus removing DNA supercoils. Finally, in the religation step, the DNA 3'-OH attacks the covalent intermediate to expel the active-site tyrosine and restore the DNA phosphodiester backbone. The chain is DNA topoisomerase 1 from Mycoplasma pneumoniae (strain ATCC 29342 / M129 / Subtype 1) (Mycoplasmoides pneumoniae).